A 382-amino-acid chain; its full sequence is Pyrimidine monooxygenase RutA (382 aa).

Residues 68 to 69 (IK), Asn134, Glu143, 159 to 160 (RY), and Ser209 each bind FMN.

It belongs to the NtaA/SnaA/DszA monooxygenase family. RutA subfamily.

The enzyme catalyses uracil + FMNH2 + NADH + O2 = (Z)-3-ureidoacrylate + FMN + NAD(+) + H2O + H(+). It carries out the reaction thymine + FMNH2 + NADH + O2 = (Z)-2-methylureidoacrylate + FMN + NAD(+) + H2O + H(+). Its function is as follows. Catalyzes the pyrimidine ring opening between N-3 and C-4 by an unusual flavin hydroperoxide-catalyzed mechanism, adding oxygen atoms in the process to yield ureidoacrylate peracid, that immediately reacts with FMN forming ureidoacrylate and FMN-N(5)-oxide. The FMN-N(5)-oxide reacts spontaneously with NADH to produce FMN. Requires the flavin reductase RutF to regenerate FMN in vivo. This is Pyrimidine monooxygenase RutA (rutA) from Escherichia coli O157:H7.